A 314-amino-acid polypeptide reads, in one-letter code: Trimethylamine N-oxide-binding protein (314 aa).

Residues M1–A24 form the signal peptide. Trimethylamine N-oxide contacts are provided by W38, W85, E114, W164, and W212.

As to quaternary structure, the complex is probably composed of two ATP-binding proteins (TmoW), two transmembrane proteins (TmoV) and a solute-binding protein (TmoX).

Its subcellular location is the periplasm. Part of the ABC transporter complex TmoXWV involved in trimethylamine N-oxide (TMAO) import. Possesses a high binding affinity toward TMAO, but presents little binding affinity toward betaine, carnitine, trimethylamine (TMA) or dimethylamine (DMA). The polypeptide is Trimethylamine N-oxide-binding protein (Pelagibacter ubique (strain HTCC1062)).